Consider the following 935-residue polypeptide: Progesterone receptor (935 aa).

An AF3; mediates transcriptional activation region spans residues 1 to 164 (MTELKAKGPR…PATQGVLSPL (164 aa)). The disordered stretch occupies residues 1–254 (MTELKAKGPR…GGAAAGGGAA (254 aa)). A modulating, Pro-Rich region spans residues 1 to 568 (MTELKAKGPR…YSFESLPQKI (568 aa)). Phosphoserine is present on S20. The short motif at 55 to 59 (LDGLL) is the LXXL motif 1 element. A Phosphoserine modification is found at S81. The LXXL motif 2 motif lies at 115 to 119 (LDTLL). Residues S130 and S162 each carry the phosphoserine modification. Residues 165 to 305 (MSRSGGKAGD…LATTVMDFIH (141 aa)) form a mediates transcriptional transrepression region. Residues 183–187 (KVLPR) carry the Nuclear localization signal motif. Phosphoserine occurs at positions 190 and 213. The segment covering 220–231 (EVEEEDGSESED) has biased composition (acidic residues). The segment covering 232 to 246 (SAGPLLKGKPRALGG) has biased composition (low complexity). S294 is subject to Phosphoserine; by MAPK1. Positions 331 to 378 (GGAGAASAFAPPRSSPSASSTPVAVGDFPDCAYPPDAEPKDDAYPLYS) are disordered. Positions 335 to 350 (AASAFAPPRSSPSASS) are enriched in low complexity. S345 bears the Phosphoserine; by MAPK mark. K388 is covalently cross-linked (Glycyl lysine isopeptide (Lys-Gly) (interchain with G-Cter in SUMO); alternate). K388 is covalently cross-linked (Glycyl lysine isopeptide (Lys-Gly) (interchain with G-Cter in ubiquitin); alternate). S400 is modified (phosphoserine; by CDK2). A compositionally biased stretch (pro residues) spans 418–430 (PLGPPPPLPPRAP). Residues 418–438 (PLGPPPPLPPRAPPTRAGEAA) are disordered. The segment at 456-548 (STLECILYKA…VYPPYLNYLR (93 aa)) is AF1; mediates transcriptional activation. Residue K533 forms a Glycyl lysine isopeptide (Lys-Gly) (interchain with G-Cter in SUMO) linkage. 2 consecutive NR C4-type zinc fingers follow at residues 569–589 (CLICGDEASGCHYGVLTCGSC) and 605–629 (CAGRNDCIVDKIRRKNCPACRLRKC). The segment at residues 569 to 641 (CLICGDEASG…AGMVLGGRKF (73 aa)) is a DNA-binding region (nuclear receptor). Position 678 is a phosphoserine (S678). One can recognise an NR LBD domain in the interval 681 to 915 (QDIQLIPPLI…EFPEMMSEVI (235 aa)). The tract at residues 689–935 (LINLLMSIEP…MVKPLLFHKK (247 aa)) is AF2; mediates transcriptional activation.

The protein belongs to the nuclear hormone receptor family. In terms of assembly, interacts with SMARD1 and UNC45A. Interacts with CUEDC2; the interaction promotes ubiquitination, decreases sumoylation, and represses transcriptional activity. Interacts with PIAS3; the interaction promotes sumoylation of PR in a hormone-dependent manner, inhibits DNA-binding, and alters nuclear export. Interacts with SP1; the interaction requires ligand-induced phosphorylation on Ser-345 by ERK1/2-MAPK. Interacts with PRMT2. Interacts with NCOA2 and NCOA1. Interacts with KLF9. Interacts with GTF2B. Phosphorylated on multiple serine sites. Several of these sites are hormone-dependent. Phosphorylation on Ser-294 is highly hormone-dependent and modulates ubiquitination and sumoylation on Lys-388. Phosphorylation on Ser-102 and Ser-345 also requires induction by hormone. Basal phosphorylation on Ser-81, Ser-162, Ser-190 and Ser-400 is increased in response to progesterone and can be phosphorylated in vitro by the CDK2-A1 complex. Increased levels of phosphorylation on Ser-400 also in the presence of EGF, heregulin, IGF, PMA and FBS. Phosphorylation at this site by CDK2 is ligand-independent, and increases nuclear translocation and transcriptional activity. Phosphorylation at Ser-162 and Ser-294, but not at Ser-190, is impaired during the G(2)/M phase of the cell cycle. Phosphorylation on Ser-345 by ERK1/2 MAPK is required for interaction with SP1. Post-translationally, sumoylation is hormone-dependent and represses transcriptional activity. Sumoylation on all three sites is enhanced by PIAS3. Desumoylated by SENP1. Sumoylation on Lys-388, the main site of sumoylation, is repressed by ubiquitination on the same site, and modulated by phosphorylation at Ser-294. In terms of processing, ubiquitination is hormone-dependent and represses sumoylation on the same site. Promoted by MAPK-mediated phosphorylation on Ser-294. Palmitoylated by ZDHHC7 and ZDHHC21. Palmitoylation is required for plasma membrane targeting and for rapid intracellular signaling via ERK and AKT kinases and cAMP generation.

It localises to the nucleus. Its subcellular location is the cytoplasm. In terms of biological role, the steroid hormones and their receptors are involved in the regulation of eukaryotic gene expression and affect cellular proliferation and differentiation in target tissues. Transcriptional activator of several progesteron-dependent promoters in a variety of cell types. Involved in activation of SRC-dependent MAPK signaling on hormone stimulation. The chain is Progesterone receptor (PGR) from Pongo pygmaeus (Bornean orangutan).